Here is a 113-residue protein sequence, read N- to C-terminus: Bactofilin BacN (113 aa).

Belongs to the bactofilin family. In terms of assembly, interacts with BacO and BacP, the 3 proteins colocalize as an extended structure.

The protein localises to the cytoplasm. It is found in the cytoskeleton. Its function is as follows. A non-essential component of the chromosome segregation machinery. Positions the ParA-ParB-parS chromosome segregation machinery within the cell; BacP seems to be the most important bactofilin in this process. Forms a heteropolymeric, subpolar scaffold in the cell; BacP probably forms the core, BacO contributes to position and integrity while BacN does not seem to contribute to assembly. This chain is Bactofilin BacN, found in Myxococcus xanthus (strain DK1622).